Consider the following 169-residue polypeptide: Disulfide bond formation protein B (169 aa).

Over Met1–Ser13 the chain is Cytoplasmic. Residues Trp14–Phe30 form a helical membrane-spanning segment. Residues Phe31 to Val48 are Periplasmic-facing. An intrachain disulfide couples Cys40 to Cys43. Residues Ala49–Pro64 traverse the membrane as a helical segment. Residues Lys65–Leu71 are Cytoplasmic-facing. The helical transmembrane segment at Val72–Tyr89 threads the bilayer. The Periplasmic portion of the chain corresponds to Glu90–Gln144. Residues Cys104 and Cys130 are joined by a disulfide bond. Residues Trp145–Pro163 traverse the membrane as a helical segment. The Cytoplasmic segment spans residues Ala164–Lys169.

It belongs to the DsbB family.

The protein localises to the cell inner membrane. Required for disulfide bond formation in some periplasmic proteins. Acts by oxidizing the DsbA protein. The chain is Disulfide bond formation protein B from Shewanella frigidimarina (strain NCIMB 400).